The following is a 379-amino-acid chain: Putative cyclic ADP-D-ribose synthase TIR2 (379 aa).

Residues Lys-254–Lys-379 form the TIR domain. The active site involves Glu-335.

As to quaternary structure, homodimer.

Its subcellular location is the cytoplasm. With respect to regulation, activated upon phage infection. In terms of biological role, one of 2 TIR-like protein components of the Thoeris antiviral defense system, composed of ThsA, TIR1 (thsB1) and TIR2 (thsB2). Phage infection activates this protein; by 70 minutes post-infection with phage SPO1, TIR2 generates a signal molecule that in turn activates the NAD(+) hydrolase activity of ThsA (tested with B.cereus). The signal is similar to cyclic ADP-D-ribose, but how it differs is unknown. Expression of Thoeris in B.subtilis (strain BEST7003) confers resistance to phages phi29, phi3T, SPBeta, SBSphi11, SBSphi13, SBSphiJ, SPO1 and SPR but not SBSphiC. The TIR paralogs confer resistance to different phages; this subunit confers resistance to phi3T, SPBeta, SBSphi13, SBSphiJ, SPO1 and SPR but not phi29, SBSphi11 or SBSphiC. There is overlap in the phage range for this system, both TIR1 and TIR2 are activated by SBSphi13, SBSphiJ, SPO1 and SPR. Probably hydrolyzes NAD(+) to make a cyclic ADP-D-ribose (cADPR) signaling molecule; might make 3'cADPR. The polypeptide is Putative cyclic ADP-D-ribose synthase TIR2 (Cytobacillus dafuensis (Bacillus dafuensis)).